A 251-amino-acid chain; its full sequence is Ribonuclease 3 (251 aa).

In terms of domain architecture, RNase III spans 3–125; it reads LATLETRLGH…LFGAVFLDAG (123 aa). Mg(2+) is bound at residue Glu-38. The active site involves Asp-42. Asp-111 and Glu-114 together coordinate Mg(2+). Residue Glu-114 is part of the active site. The 71-residue stretch at 152–222 folds into the DRBM domain; that stretch reads DAKTLLQEFL…AKLALEAALV (71 aa).

The protein belongs to the ribonuclease III family. As to quaternary structure, homodimer. It depends on Mg(2+) as a cofactor.

It is found in the cytoplasm. The enzyme catalyses Endonucleolytic cleavage to 5'-phosphomonoester.. In terms of biological role, digests double-stranded RNA. Involved in the processing of primary rRNA transcript to yield the immediate precursors to the large and small rRNAs (23S and 16S). Processes some mRNAs, and tRNAs when they are encoded in the rRNA operon. Processes pre-crRNA and tracrRNA of type II CRISPR loci if present in the organism. This chain is Ribonuclease 3, found in Bordetella avium (strain 197N).